The following is a 212-amino-acid chain: Probable GTP-binding protein EngB (212 aa).

Residues 38–210 (SLPEIAFVGK…KASLAKCIKP (173 aa)) enclose the EngB-type G domain. Residues 46–53 (GKSNVGKS), 73–77 (GRTRQ), 91–94 (DLPG), 158–161 (TKSD), and 189–191 (VSS) each bind GTP. Residues Ser53 and Thr75 each coordinate Mg(2+).

Belongs to the TRAFAC class TrmE-Era-EngA-EngB-Septin-like GTPase superfamily. EngB GTPase family. Mg(2+) is required as a cofactor.

Its function is as follows. Necessary for normal cell division and for the maintenance of normal septation. This is Probable GTP-binding protein EngB from Rickettsia felis (strain ATCC VR-1525 / URRWXCal2) (Rickettsia azadi).